We begin with the raw amino-acid sequence, 197 residues long: OV-16 antigen (197 aa).

The N-terminal stretch at 1 to 16 (MHCLQVVIAIVLYSFG) is a signal peptide. N56, N61, N119, and N124 each carry an N-linked (GlcNAc...) asparagine glycan.

This sequence belongs to the phosphatidylethanolamine-binding protein family. As to expression, hypodermis, cuticle and uterus.

This is OV-16 antigen (OV16) from Onchocerca volvulus.